The sequence spans 292 residues: Ubiquinone biosynthesis protein UbiV (292 aa).

The [4Fe-4S] cluster site is built by Cys39, Cys180, Cys193, and Cys197.

It belongs to the peptidase U32 family. UbiV subfamily. Forms a heterodimer with UbiU. [4Fe-4S] cluster is required as a cofactor.

It participates in cofactor biosynthesis; ubiquinone biosynthesis. Its function is as follows. Required for O(2)-independent ubiquinone (coenzyme Q) biosynthesis. Together with UbiU, is essential for the C6-hydroxylation reaction in the oxygen-independent ubiquinone biosynthesis pathway. This is Ubiquinone biosynthesis protein UbiV from Escherichia coli (strain K12).